Consider the following 375-residue polypeptide: Chaperone protein DnaJ (375 aa).

Residues 5 to 69 (DYYEVLGVSK…QKRAQYDQFG (65 aa)) enclose the J domain. The CR-type zinc finger occupies 132-214 (GKETIIEIPR…CGGTGKVKKR (83 aa)). Zn(2+)-binding residues include Cys-145, Cys-148, Cys-162, Cys-165, Cys-188, Cys-191, Cys-202, and Cys-205. CXXCXGXG motif repeat units follow at residues 145–152 (CETCKGSG), 162–169 (CSHCGGSG), 188–195 (CHHCEGTG), and 202–209 (CSDCGGTG).

This sequence belongs to the DnaJ family. In terms of assembly, homodimer. Requires Zn(2+) as cofactor.

It is found in the cytoplasm. In terms of biological role, participates actively in the response to hyperosmotic and heat shock by preventing the aggregation of stress-denatured proteins and by disaggregating proteins, also in an autonomous, DnaK-independent fashion. Unfolded proteins bind initially to DnaJ; upon interaction with the DnaJ-bound protein, DnaK hydrolyzes its bound ATP, resulting in the formation of a stable complex. GrpE releases ADP from DnaK; ATP binding to DnaK triggers the release of the substrate protein, thus completing the reaction cycle. Several rounds of ATP-dependent interactions between DnaJ, DnaK and GrpE are required for fully efficient folding. Also involved, together with DnaK and GrpE, in the DNA replication of plasmids through activation of initiation proteins. In Bacillus velezensis (strain DSM 23117 / BGSC 10A6 / LMG 26770 / FZB42) (Bacillus amyloliquefaciens subsp. plantarum), this protein is Chaperone protein DnaJ.